Here is a 236-residue protein sequence, read N- to C-terminus: MKFSEECRSAAAEWWEGSFVHPFVQGIGDGTLPIDRFKYYVLQDSYYLTHFAKVQSFGAAYAKDLYTTGRMASHAQGTYEAEMALHREFAELLEISEEERKAFKPSPTAYSYTSHMYRSVLSGNFAEILAALLPCYWLYYEVGEKLLHCDPGHPIYQKWIGTYGGDWFRQQVEEQINRFDELAENSTEEVRAKMKENFVISSYYEYQFWGMAYRKEGWSDSAIKEVEECGASRHNG.

D44 lines the substrate pocket. C135 functions as the Nucleophile in the catalytic mechanism. Positions 139 and 163 each coordinate substrate. E205 serves as the catalytic Proton donor.

Belongs to the TenA family. Homotetramer.

The enzyme catalyses 4-amino-5-aminomethyl-2-methylpyrimidine + H2O = 4-amino-5-hydroxymethyl-2-methylpyrimidine + NH4(+). It catalyses the reaction thiamine + H2O = 5-(2-hydroxyethyl)-4-methylthiazole + 4-amino-5-hydroxymethyl-2-methylpyrimidine + H(+). It functions in the pathway cofactor biosynthesis; thiamine diphosphate biosynthesis. Its function is as follows. Catalyzes an amino-pyrimidine hydrolysis reaction at the C5' of the pyrimidine moiety of thiamine compounds, a reaction that is part of a thiamine salvage pathway. Thus, catalyzes the conversion of 4-amino-5-aminomethyl-2-methylpyrimidine to 4-amino-5-hydroxymethyl-2-methylpyrimidine (HMP). To a lesser extent, is also able to catalyze the hydrolytic cleavage of thiamine; however, this thiaminase activity is unlikely to be physiologically relevant. Therefore, is involved in the regeneration of the thiamine pyrimidine from thiamine degraded products present in the environment, rather than in thiamine degradation. This chain is Aminopyrimidine aminohydrolase, found in Bacillus subtilis (strain 168).